A 536-amino-acid polypeptide reads, in one-letter code: Butyrophilin-like protein 9 (536 aa).

Positions 1-35 (MADFSVFLGFLKQIPRCLSIFFTYLLFLQLWEVNS) are cleaved as a signal peptide. Ig-like V-type domains are found at residues 36–149 (DKVW…WELE) and 152–241 (GSGS…KEFV). Residues 36-257 (DKVWVLGPEE…FLPRMSPWKK (222 aa)) lie on the Extracellular side of the membrane. Cys-59 and Cys-133 are oxidised to a cystine. Residues Asn-102, Asn-139, and Asn-224 are each glycosylated (N-linked (GlcNAc...) asparagine). Cys-173 and Cys-227 are joined by a disulfide. Residues 258 to 278 (AFVGTLVVLPLSLIVLTMLAL) form a helical membrane-spanning segment. At 279-536 (RYFYKLRSFQ…PAWAVNEAVS (258 aa)) the chain is on the cytoplasmic side. The region spanning 307 to 506 (DWRRSEGQAE…MTICSLPVRG (200 aa)) is the B30.2/SPRY domain.

This sequence belongs to the immunoglobulin superfamily. BTN/MOG family.

The protein resides in the membrane. This chain is Butyrophilin-like protein 9 (Btnl9), found in Mus musculus (Mouse).